Reading from the N-terminus, the 231-residue chain is Large ribosomal subunit protein uL1 (231 aa).

Belongs to the universal ribosomal protein uL1 family. Part of the 50S ribosomal subunit.

Its function is as follows. Binds directly to 23S rRNA. The L1 stalk is quite mobile in the ribosome, and is involved in E site tRNA release. Functionally, protein L1 is also a translational repressor protein, it controls the translation of the L11 operon by binding to its mRNA. The polypeptide is Large ribosomal subunit protein uL1 (Ralstonia nicotianae (strain ATCC BAA-1114 / GMI1000) (Ralstonia solanacearum)).